Here is a 952-residue protein sequence, read N- to C-terminus: Aminopeptidase 2, mitochondrial (952 aa).

The N-terminal 52 residues, 1–52 (MPIVRWLLLKSAVRGSSLIGKAHPCLRSIAAHPRYLSNVYSPPAGVSRSLRI), are a transit peptide targeting the mitochondrion. Substrate is bound by residues E228 and 360-364 (GAMEN). N-linked (GlcNAc...) asparagine glycosylation is present at N381. Residue H396 participates in Zn(2+) binding. Residue E397 is the Proton acceptor of the active site. Zn(2+) is bound by residues H400 and E419. N-linked (GlcNAc...) asparagine glycosylation is present at N713.

This sequence belongs to the peptidase M1 family. Requires Zn(2+) as cofactor.

It is found in the periplasm. It localises to the cytoplasm. The protein localises to the mitochondrion. Functionally, involved in the cellular supply of leucine from externally offered leucine-containing dipeptide substrates. This Saccharomyces cerevisiae (strain ATCC 204508 / S288c) (Baker's yeast) protein is Aminopeptidase 2, mitochondrial (APE2).